A 176-amino-acid polypeptide reads, in one-letter code: Glutathione-regulated potassium-efflux system ancillary protein KefF (176 aa).

FMN is bound by residues H8, 14–17 (SHAN), 65–68 (MQWY), and 105–108 (TTGG).

Belongs to the NAD(P)H dehydrogenase (quinone) family. KefF subfamily. In terms of assembly, homodimer. Interacts with KefC. It depends on FMN as a cofactor.

It localises to the cell inner membrane. It carries out the reaction a quinone + NADH + H(+) = a quinol + NAD(+). It catalyses the reaction a quinone + NADPH + H(+) = a quinol + NADP(+). In terms of biological role, regulatory subunit of a potassium efflux system that confers protection against electrophiles. Required for full activity of KefC. Shows redox enzymatic activity, but this enzymatic activity is not required for activation of KefC. This is Glutathione-regulated potassium-efflux system ancillary protein KefF from Salmonella gallinarum (strain 287/91 / NCTC 13346).